Here is a 307-residue protein sequence, read N- to C-terminus: Protoheme IX farnesyltransferase (307 aa).

The next 9 membrane-spanning stretches (helical) occupy residues 33–53 (IGIVNSNLITTFAGMWLAFYF), 62–82 (LHIVFFTLFGAALVIAGSCSI), 111–131 (RVLWLGVTLVAIGTMSLLMTT), 132–152 (VTAAIVGLIGVVTYVFLYTLW), 159–179 (LNTVVGSISGAVPPVIGWTAV), 185–205 (IVPLILFLIMFLWQPPHFLAL), 229–249 (MTKRQIIVWVACLLPLPFYLF), 251–271 (LGIPFLIVATVLNVGWLLLGL), and 287–307 (FVYSLNYLTILFVAMVIATIW).

This sequence belongs to the UbiA prenyltransferase family. Protoheme IX farnesyltransferase subfamily. In terms of assembly, interacts with CtaA.

It is found in the cell membrane. It carries out the reaction heme b + (2E,6E)-farnesyl diphosphate + H2O = Fe(II)-heme o + diphosphate. The protein operates within porphyrin-containing compound metabolism; heme O biosynthesis; heme O from protoheme: step 1/1. Functionally, converts heme B (protoheme IX) to heme O by substitution of the vinyl group on carbon 2 of heme B porphyrin ring with a hydroxyethyl farnesyl side group. The sequence is that of Protoheme IX farnesyltransferase from Geobacillus thermodenitrificans (strain NG80-2).